Consider the following 242-residue polypeptide: Uridylate kinase (242 aa).

11–14 (KLSG) contacts ATP. The interval 19–24 (GNMGYG) is involved in allosteric activation by GTP. G53 lines the UMP pocket. Residues G54 and R58 each coordinate ATP. UMP-binding positions include D73 and 134–141 (SGNPFFTT). Residues T161, Y167, and D170 each contribute to the ATP site.

Belongs to the UMP kinase family. In terms of assembly, homohexamer.

It localises to the cytoplasm. The enzyme catalyses UMP + ATP = UDP + ADP. It functions in the pathway pyrimidine metabolism; CTP biosynthesis via de novo pathway; UDP from UMP (UMPK route): step 1/1. Its activity is regulated as follows. Allosterically activated by GTP. Inhibited by UTP. Catalyzes the reversible phosphorylation of UMP to UDP. The chain is Uridylate kinase from Nostoc sp. (strain PCC 7120 / SAG 25.82 / UTEX 2576).